Reading from the N-terminus, the 183-residue chain is Inner membrane-spanning protein YciB (183 aa).

The next 5 membrane-spanning stretches (helical) occupy residues 4–24 (FIEF…DIYM), 50–70 (MQLF…FFHD), 72–92 (TFIK…LLIS), 119–139 (VNLG…YVAF), and 149–169 (FKVF…GVYL).

Belongs to the YciB family.

The protein resides in the cell inner membrane. Plays a role in cell envelope biogenesis, maintenance of cell envelope integrity and membrane homeostasis. The protein is Inner membrane-spanning protein YciB of Aeromonas hydrophila subsp. hydrophila (strain ATCC 7966 / DSM 30187 / BCRC 13018 / CCUG 14551 / JCM 1027 / KCTC 2358 / NCIMB 9240 / NCTC 8049).